The chain runs to 199 residues: Large ribosomal subunit protein mL51 (199 aa).

The transit peptide at Met-1 to Thr-15 directs the protein to the mitochondrion.

This sequence belongs to the mitochondrion-specific ribosomal protein mL51 family. In terms of assembly, component of the mitochondrial ribosome large subunit (39S) which comprises a 16S rRNA and about 50 distinct proteins.

It localises to the mitochondrion. The protein is Large ribosomal subunit protein mL51 (mrpl-51) of Caenorhabditis briggsae.